Reading from the N-terminus, the 344-residue chain is DNA-directed RNA polymerase subunit alpha (344 aa).

The interval methionine 1–glutamate 246 is alpha N-terminal domain (alpha-NTD). Residues glutamate 259–glutamate 344 are alpha C-terminal domain (alpha-CTD).

The protein belongs to the RNA polymerase alpha chain family. In terms of assembly, homodimer. The RNAP catalytic core consists of 2 alpha, 1 beta, 1 beta' and 1 omega subunit. When a sigma factor is associated with the core the holoenzyme is formed, which can initiate transcription.

The catalysed reaction is RNA(n) + a ribonucleoside 5'-triphosphate = RNA(n+1) + diphosphate. Functionally, DNA-dependent RNA polymerase catalyzes the transcription of DNA into RNA using the four ribonucleoside triphosphates as substrates. This is DNA-directed RNA polymerase subunit alpha from Borreliella burgdorferi (strain ATCC 35210 / DSM 4680 / CIP 102532 / B31) (Borrelia burgdorferi).